Reading from the N-terminus, the 192-residue chain is BON1-associated protein 1 (192 aa).

The region spanning 1 to 119 (MIYFGRSIDN…RYSPEGHLNF (119 aa)) is the C2 domain.

As to quaternary structure, interacts with BON1 (via VWA domain), BON2 and BON3. As to expression, expressed in roots, leaves, stems and flowers.

The protein localises to the membrane. In terms of biological role, negative regulator of cell death and defense responses. Exhibits calcium-dependent phospholipid binding properties. The sequence is that of BON1-associated protein 1 (BAP1) from Arabidopsis thaliana (Mouse-ear cress).